The sequence spans 61 residues: MAKDFLNGKRTHFGNKRSHALNSSRRAWKPNLQKVRILVDGKPKKVWISARTLKSGKVTRV.

The disordered stretch occupies residues 1-26 (MAKDFLNGKRTHFGNKRSHALNSSRR). Basic residues predominate over residues 9 to 19 (KRTHFGNKRSH).

This sequence belongs to the bacterial ribosomal protein bL28 family.

This Levilactobacillus brevis (strain ATCC 367 / BCRC 12310 / CIP 105137 / JCM 1170 / LMG 11437 / NCIMB 947 / NCTC 947) (Lactobacillus brevis) protein is Large ribosomal subunit protein bL28.